The chain runs to 577 residues: Proline--tRNA ligase (577 aa).

The protein belongs to the class-II aminoacyl-tRNA synthetase family. ProS type 1 subfamily. In terms of assembly, homodimer.

It is found in the cytoplasm. The catalysed reaction is tRNA(Pro) + L-proline + ATP = L-prolyl-tRNA(Pro) + AMP + diphosphate. Catalyzes the attachment of proline to tRNA(Pro) in a two-step reaction: proline is first activated by ATP to form Pro-AMP and then transferred to the acceptor end of tRNA(Pro). As ProRS can inadvertently accommodate and process non-cognate amino acids such as alanine and cysteine, to avoid such errors it has two additional distinct editing activities against alanine. One activity is designated as 'pretransfer' editing and involves the tRNA(Pro)-independent hydrolysis of activated Ala-AMP. The other activity is designated 'posttransfer' editing and involves deacylation of mischarged Ala-tRNA(Pro). The misacylated Cys-tRNA(Pro) is not edited by ProRS. The sequence is that of Proline--tRNA ligase from Herminiimonas arsenicoxydans.